A 239-amino-acid chain; its full sequence is Uridylate kinase (239 aa).

13 to 16 lines the ATP pocket; the sequence is KVSG. G55 contributes to the UMP binding site. The ATP site is built by G56 and R60. Residues D75 and 136-143 contribute to the UMP site; that span reads TGNPFFTT. The ATP site is built by T163, Q164, Y169, and D172.

Belongs to the UMP kinase family. As to quaternary structure, homohexamer.

It is found in the cytoplasm. It carries out the reaction UMP + ATP = UDP + ADP. It participates in pyrimidine metabolism; CTP biosynthesis via de novo pathway; UDP from UMP (UMPK route): step 1/1. Inhibited by UTP. In terms of biological role, catalyzes the reversible phosphorylation of UMP to UDP. In Bartonella bacilliformis (strain ATCC 35685 / KC583 / Herrer 020/F12,63), this protein is Uridylate kinase.